The chain runs to 323 residues: Beta-ketoacyl-[acyl-carrier-protein] synthase III (323 aa).

Residues C114 and H250 contribute to the active site. The segment at 251–255 (QANLR) is ACP-binding. N280 is a catalytic residue.

The protein belongs to the thiolase-like superfamily. FabH family. As to quaternary structure, homodimer.

Its subcellular location is the cytoplasm. It catalyses the reaction malonyl-[ACP] + acetyl-CoA + H(+) = 3-oxobutanoyl-[ACP] + CO2 + CoA. Its pathway is lipid metabolism; fatty acid biosynthesis. Its function is as follows. Catalyzes the condensation reaction of fatty acid synthesis by the addition to an acyl acceptor of two carbons from malonyl-ACP. Catalyzes the first condensation reaction which initiates fatty acid synthesis and may therefore play a role in governing the total rate of fatty acid production. Possesses both acetoacetyl-ACP synthase and acetyl transacylase activities. Its substrate specificity determines the biosynthesis of branched-chain and/or straight-chain of fatty acids. This Cereibacter sphaeroides (strain ATCC 17029 / ATH 2.4.9) (Rhodobacter sphaeroides) protein is Beta-ketoacyl-[acyl-carrier-protein] synthase III.